Here is a 214-residue protein sequence, read N- to C-terminus: Small ribosomal subunit protein uS3c (214 aa).

The KH type-2 domain maps to 39–111; it reads IRTYLNKLAK…QLTINIIEVE (73 aa).

This sequence belongs to the universal ribosomal protein uS3 family. As to quaternary structure, part of the 30S ribosomal subunit.

The protein resides in the plastid. It localises to the chloroplast. The sequence is that of Small ribosomal subunit protein uS3c (rps3) from Trieres chinensis (Marine centric diatom).